A 454-amino-acid polypeptide reads, in one-letter code: Pup--protein ligase (454 aa).

Residue glutamate 9 coordinates Mg(2+). Arginine 53 serves as a coordination point for ATP. Tyrosine 55 serves as a coordination point for Mg(2+). The active-site Proton acceptor is aspartate 57. Glutamate 63 contributes to the Mg(2+) binding site. ATP contacts are provided by threonine 66 and tryptophan 420.

Belongs to the Pup ligase/Pup deamidase family. Pup-conjugating enzyme subfamily.

It carries out the reaction ATP + [prokaryotic ubiquitin-like protein]-L-glutamate + [protein]-L-lysine = ADP + phosphate + N(6)-([prokaryotic ubiquitin-like protein]-gamma-L-glutamyl)-[protein]-L-lysine.. Its pathway is protein degradation; proteasomal Pup-dependent pathway. It participates in protein modification; protein pupylation. Functionally, catalyzes the covalent attachment of the prokaryotic ubiquitin-like protein modifier Pup to the proteasomal substrate proteins, thereby targeting them for proteasomal degradation. This tagging system is termed pupylation. The ligation reaction involves the side-chain carboxylate of the C-terminal glutamate of Pup and the side-chain amino group of a substrate lysine. The protein is Pup--protein ligase of Arthrobacter sp. (strain FB24).